The following is a 431-amino-acid chain: D-inositol 3-phosphate glycosyltransferase (431 aa).

Histidine 21 serves as a coordination point for 1D-myo-inositol 3-phosphate. UDP-N-acetyl-alpha-D-glucosamine-binding positions include 27-28 (QP) and glycine 35. Residues 32 to 37 (DAGGMN), arginine 90, tyrosine 123, threonine 147, and arginine 167 each bind 1D-myo-inositol 3-phosphate. Positions 241, 246, and 307 each coordinate UDP-N-acetyl-alpha-D-glucosamine. The Mg(2+) site is built by tyrosine 316, arginine 317, and alanine 319. 2 residues coordinate UDP-N-acetyl-alpha-D-glucosamine: glutamate 329 and glutamate 337. A Mg(2+)-binding site is contributed by threonine 343.

Belongs to the glycosyltransferase group 1 family. MshA subfamily. As to quaternary structure, homodimer.

It catalyses the reaction 1D-myo-inositol 3-phosphate + UDP-N-acetyl-alpha-D-glucosamine = 1D-myo-inositol 2-acetamido-2-deoxy-alpha-D-glucopyranoside 3-phosphate + UDP + H(+). Catalyzes the transfer of a N-acetyl-glucosamine moiety to 1D-myo-inositol 3-phosphate to produce 1D-myo-inositol 2-acetamido-2-deoxy-glucopyranoside 3-phosphate in the mycothiol biosynthesis pathway. This is D-inositol 3-phosphate glycosyltransferase from Saccharomonospora viridis (strain ATCC 15386 / DSM 43017 / JCM 3036 / CCUG 5913 / NBRC 12207 / NCIMB 9602 / P101) (Thermoactinomyces viridis).